Consider the following 382-residue polypeptide: Na(+)/H(+) antiporter NhaA 2 (382 aa).

Transmembrane regions (helical) follow at residues phenylalanine 11 to alanine 31, leucine 45 to valine 65, leucine 91 to proline 111, glycine 116 to phenylalanine 136, tyrosine 145 to tyrosine 165, proline 171 to glycine 191, serine 197 to histidine 214, tryptophan 287 to leucine 307, leucine 324 to serine 344, and alanine 353 to glycine 373.

This sequence belongs to the NhaA Na(+)/H(+) (TC 2.A.33) antiporter family.

Its subcellular location is the cell inner membrane. It catalyses the reaction Na(+)(in) + 2 H(+)(out) = Na(+)(out) + 2 H(+)(in). Functionally, na(+)/H(+) antiporter that extrudes sodium in exchange for external protons. In Pelobacter propionicus (strain DSM 2379 / NBRC 103807 / OttBd1), this protein is Na(+)/H(+) antiporter NhaA 2.